The primary structure comprises 129 residues: MSWLDQITWTDDGLVPVIAQEWQSNDVLMFAWMNREALALTAQRGEAVYWSRSRGRLWHKGEESGHVQRVHEIRIDCDADVVLLKVEQLGHQPGIACHTGRHSCFFQLLKDGAWQSVEPVLKDPSSIYK.

Asp-76 serves as a coordination point for Mg(2+). Cys-77 is a binding site for Zn(2+). Mg(2+) contacts are provided by Asp-78 and Asp-80. Cys-97 and Cys-104 together coordinate Zn(2+).

This sequence belongs to the PRA-CH family. In terms of assembly, homodimer. Mg(2+) is required as a cofactor. It depends on Zn(2+) as a cofactor.

Its subcellular location is the cytoplasm. The enzyme catalyses 1-(5-phospho-beta-D-ribosyl)-5'-AMP + H2O = 1-(5-phospho-beta-D-ribosyl)-5-[(5-phospho-beta-D-ribosylamino)methylideneamino]imidazole-4-carboxamide. It participates in amino-acid biosynthesis; L-histidine biosynthesis; L-histidine from 5-phospho-alpha-D-ribose 1-diphosphate: step 3/9. Its function is as follows. Catalyzes the hydrolysis of the adenine ring of phosphoribosyl-AMP. The chain is Phosphoribosyl-AMP cyclohydrolase from Leptothrix cholodnii (strain ATCC 51168 / LMG 8142 / SP-6) (Leptothrix discophora (strain SP-6)).